We begin with the raw amino-acid sequence, 1004 residues long: Sal-like protein 2 (1004 aa).

Disordered regions lie at residues 1–33 (MSRR…EDHP), 51–122 (AHQN…EESS), 137–177 (GGGL…SGHL), 220–270 (PASP…EPPK), and 285–307 (PFSV…ALPG). The segment at 34-56 (QVCAKCCAQFSDPTEFLAHQNSC) adopts a C2H2-type 1; atypical zinc-finger fold. The segment covering 71 to 81 (NPSNSSASSAP) has biased composition (low complexity). The segment covering 83–98 (PEGHSRSQVMDTEHSN) has biased composition (basic and acidic residues). The segment covering 99–110 (PPDSGSSGAPDP) has biased composition (low complexity). Residues 151–171 (PLPPESTPAPPPPPPPPPPPG) show a composition bias toward pro residues. Residue S243 is modified to Phosphoserine. C2H2-type zinc fingers lie at residues 372–394 (HKCR…LRSH), 400–422 (YKCN…FHRH), 629–651 (NQCV…YGQH), 657–679 (FKCK…FVGH), and 689–711 (NSCP…VRMH). Positions 712-910 (LGGQIPNGGS…PGESSGRKAC (199 aa)) are disordered. The segment covering 731–742 (QENSSEQSTASG) has biased composition (polar residues). The segment covering 756 to 779 (PEEEMSEEEEEDEEEEEDVTDEDS) has biased composition (acidic residues). 3 positions are modified to phosphoserine: S794, S799, and S803. Residues 800 to 809 (EEVSGAEEEV) are compositionally biased toward acidic residues. Residues 810 to 819 (ATSVAAPTTV) are compositionally biased toward low complexity. Residues 820 to 829 (KEMDSNEKAP) show a composition bias toward basic and acidic residues. Over residues 832–841 (TLPPPPPPPD) the composition is skewed to pro residues. Residues 896-910 (AMKKDPGESSGRKAC) show a composition bias toward basic and acidic residues. A Glycyl lysine isopeptide (Lys-Gly) (interchain with G-Cter in ubiquitin) cross-link involves residue K908. 2 consecutive C2H2-type zinc fingers follow at residues 908 to 930 (KACE…QKTH) and 937 to 961 (FTCV…LAHH).

The protein belongs to the sal C2H2-type zinc-finger protein family. As to expression, expressed throughout embryonic development. In adult predominantly in brain.

The protein resides in the nucleus. In terms of biological role, probable transcription factor that plays a role in eye development before, during, and after optic fissure closure. The polypeptide is Sal-like protein 2 (Sall2) (Mus musculus (Mouse)).